Reading from the N-terminus, the 59-residue chain is UPF0434 protein Sbal_1685 (59 aa).

Belongs to the UPF0434 family.

The polypeptide is UPF0434 protein Sbal_1685 (Shewanella baltica (strain OS155 / ATCC BAA-1091)).